The primary structure comprises 542 residues: Chaperonin GroEL (542 aa).

Residues 29–32, 86–90, G413, 476–478, and D492 contribute to the ATP site; these read TLGP, DGTTT, and NAA.

The protein belongs to the chaperonin (HSP60) family. Forms a cylinder of 14 subunits composed of two heptameric rings stacked back-to-back. Interacts with the co-chaperonin GroES.

The protein localises to the cytoplasm. It catalyses the reaction ATP + H2O + a folded polypeptide = ADP + phosphate + an unfolded polypeptide.. Functionally, together with its co-chaperonin GroES, plays an essential role in assisting protein folding. The GroEL-GroES system forms a nano-cage that allows encapsulation of the non-native substrate proteins and provides a physical environment optimized to promote and accelerate protein folding. The sequence is that of Chaperonin GroEL from Lactococcus lactis subsp. cremoris (strain SK11).